We begin with the raw amino-acid sequence, 87 residues long: Putative RNase MJ1548 (87 aa).

Residues R65 and H70 contribute to the active site. Positions 65–72 (RNAIVHKY) match the RX(4)HXY motif motif. Y72 carries the post-translational modification O-di-AMP-tyrosine.

It belongs to the HepT RNase toxin family. Homodimer, probably forms a complex with cognate antitoxin MJ1547. In terms of processing, modified by cognate antitoxin MJ1547; probably at least 2 successive AMPylation events occur on Tyr-72.

In terms of biological role, probable toxic component of a putative type VII toxin-antitoxin (TA) system, probably an RNase. Probably neutralized by cognate antitoxin MJ1547. Neutralization may be due to AMPylation by antitoxin MJ1547. This Methanocaldococcus jannaschii (strain ATCC 43067 / DSM 2661 / JAL-1 / JCM 10045 / NBRC 100440) (Methanococcus jannaschii) protein is Putative RNase MJ1548.